The chain runs to 126 residues: Large ribosomal subunit protein uL22 (126 aa).

The protein belongs to the universal ribosomal protein uL22 family. In terms of assembly, part of the 50S ribosomal subunit.

Its function is as follows. This protein binds specifically to 23S rRNA; its binding is stimulated by other ribosomal proteins, e.g. L4, L17, and L20. It is important during the early stages of 50S assembly. It makes multiple contacts with different domains of the 23S rRNA in the assembled 50S subunit and ribosome. In terms of biological role, the globular domain of the protein is located near the polypeptide exit tunnel on the outside of the subunit, while an extended beta-hairpin is found that lines the wall of the exit tunnel in the center of the 70S ribosome. The polypeptide is Large ribosomal subunit protein uL22 (Prochlorococcus marinus (strain NATL2A)).